Consider the following 890-residue polypeptide: MRLTTSVLLWAATSVLQADATQTYRSPTGPEAYGAYPPRYTVSYTTITSTSTIHSCPPRTTTIFTSSPPPDDGCKFPGCPNQPPKPGSDVHCDIYCWAKGCSLCKNDTCPEQGGIYKRREDMKNIFGRSTGSAEGYNYTPETTCCCCCEPGGGKHTVTVTKTKTETKTETASITKIITDYVTKTVLIPTTVLEPTTIIDPTTVPTTVPTTIPTTVYNETTIHDSTTVSTTVIQPTTISDTTTLTTTFTTVVPTYITTTTFGTVTSVVTVMVPTTITSTYVSTMYTTLPGTTLTTSVTVPGPTVTPPPVTLPPETKIITLPASTVTKVTTLPASTMTVTSTLPASTITQSGTTVTLPGSTTVITSTIPASTITQTYTEPGTVSTVTSTPPPETHVITLPGSTITKVTTLPGTIMTVTQTLPASTVTQSGTTVTIPASTTVITTTLPASTITQTLTEPGKEITVTKTNTVTTTTTSFSISLCPTRTANPTYTPLAPLPSNYIWGCPPGQLCRPKRTPADGQCNFEVGLPSQNFVCSPDECIPSPPRHPPQKWTPGKVEKWVVSPGYFNIDPRKFGLTFDIFSFENVTATSQGYFRRSLSALFKRGPEIVAGECYDECDSAATEAEAVGADPTLCKPDSLFMKLVGQCKKCTNDRSNGTYSDFDTVLFPEFQKWLDYCDTLPIPSGPTTRPEPGMTSSTTSSPTHSTVITSMTSMTTSESSTSMRSSSTATTSETSSTESSRTSSESSTESSTDSSTTERTRTTSTAESTETTEPTSTDASTESTSTATHSSTGSDPESTNTRHPSSTASGSTTTRGGGGGHGSSSSEGPVPTSMGTATTTGGGSIPGSGTGIPPSSSTDPVPFPGGAGSLSPSTWGKVVTCISSMALLVAFI.

Residues 1–20 (MRLTTSVLLWAATSVLQADA) form the signal peptide. Residues N106, N217, N583, and N654 are each glycosylated (N-linked (GlcNAc...) asparagine). A disordered region spans residues 680-872 (IPSGPTTRPE…GGAGSLSPST (193 aa)). Composition is skewed to low complexity over residues 693–753 (TSST…TDSS) and 760–790 (TTST…HSST). Residues 791-802 (GSDPESTNTRHP) show a composition bias toward polar residues. Low complexity-rich tracts occupy residues 803–812 (SSTASGSTTT) and 821–837 (SSSS…TATT). The segment covering 838-848 (TGGGSIPGSGT) has biased composition (gly residues). G864 carries the GPI-anchor amidated glycine lipid modification. The propeptide at 865 to 890 (AGSLSPSTWGKVVTCISSMALLVAFI) is removed in mature form.

The protein belongs to the ALS family. Post-translationally, the GPI-anchor is attached to the protein in the endoplasmic reticulum and serves to target the protein to the cell surface. There, the glucosamine-inositol phospholipid moiety is cleaved off and the GPI-modified mannoprotein is covalently attached via its lipidless GPI glycan remnant to the 1,6-beta-glucan of the outer cell wall layer.

The protein resides in the secreted. It localises to the cell membrane. It is found in the cell wall. Cell surface adhesion protein which mediates cell agglutination and host tissue adherence. The chain is Agglutinin-like protein ARB_02240 from Arthroderma benhamiae (strain ATCC MYA-4681 / CBS 112371) (Trichophyton mentagrophytes).